Consider the following 85-residue polypeptide: Large ribosomal subunit protein bL27 (85 aa).

The disordered stretch occupies residues 1–22 (MAHKKAAGSTRNGRDSESKRLG).

It belongs to the bacterial ribosomal protein bL27 family.

The sequence is that of Large ribosomal subunit protein bL27 from Pseudoalteromonas translucida (strain TAC 125).